The primary structure comprises 292 residues: 1D-myo-inositol 2-acetamido-2-deoxy-alpha-D-glucopyranoside deacetylase (292 aa).

Zn(2+) is bound by residues histidine 12, aspartate 15, and histidine 147.

It belongs to the MshB deacetylase family. Zn(2+) serves as cofactor.

The catalysed reaction is 1D-myo-inositol 2-acetamido-2-deoxy-alpha-D-glucopyranoside + H2O = 1D-myo-inositol 2-amino-2-deoxy-alpha-D-glucopyranoside + acetate. Its function is as follows. Catalyzes the deacetylation of 1D-myo-inositol 2-acetamido-2-deoxy-alpha-D-glucopyranoside (GlcNAc-Ins) in the mycothiol biosynthesis pathway. The sequence is that of 1D-myo-inositol 2-acetamido-2-deoxy-alpha-D-glucopyranoside deacetylase from Rhodococcus jostii (strain RHA1).